Here is a 555-residue protein sequence, read N- to C-terminus: Formate--tetrahydrofolate ligase (555 aa).

65 to 72 (TPAGEGKS) contacts ATP.

It belongs to the formate--tetrahydrofolate ligase family.

The enzyme catalyses (6S)-5,6,7,8-tetrahydrofolate + formate + ATP = (6R)-10-formyltetrahydrofolate + ADP + phosphate. It functions in the pathway one-carbon metabolism; tetrahydrofolate interconversion. The polypeptide is Formate--tetrahydrofolate ligase (Staphylococcus aureus (strain MRSA252)).